Here is a 284-residue protein sequence, read N- to C-terminus: Putative L-ribulose-5-phosphate 3-epimerase UlaE (284 aa).

Belongs to the L-ribulose-5-phosphate 3-epimerase family.

The catalysed reaction is L-ribulose 5-phosphate = L-xylulose 5-phosphate. Its pathway is cofactor degradation; L-ascorbate degradation; D-xylulose 5-phosphate from L-ascorbate: step 3/4. In terms of biological role, catalyzes the isomerization of L-xylulose-5-phosphate to L-ribulose-5-phosphate. Is involved in the anaerobic L-ascorbate utilization. The protein is Putative L-ribulose-5-phosphate 3-epimerase UlaE of Shigella dysenteriae serotype 1 (strain Sd197).